Consider the following 514-residue polypeptide: Ubiquitin carboxyl-terminal hydrolase 22 (514 aa).

The segment at Pro-10–Met-127 adopts a UBP-type zinc-finger fold. 12 residues coordinate Zn(2+): Cys-12, His-14, Cys-52, Cys-55, Cys-65, Cys-68, Cys-73, His-78, His-82, His-88, Cys-101, and Cys-104. Residue Lys-118 is modified to N6-acetyllysine. Position 136 is a phosphothreonine (Thr-136). Residues Arg-165–Gln-509 form the USP domain. The Nucleophile role is filled by Cys-174. Residue Ser-226 is modified to Phosphoserine. The active-site Proton acceptor is His-468.

Belongs to the peptidase C19 family. UBP8 subfamily. In terms of assembly, component of some SAGA transcription coactivator-HAT complexes, at least composed of ATXN7, ATXN7L3, ENY2, GCN5L2, SUPT3H, TAF10, TRRAP and USP22. Within the SAGA complex, ATXN7L3, ENY2 and USP22 form a subcomplex required for histone deubiquitination. Interacts directly with ATXN7L3; leading to its recruitment to the SAGA complex. Interacts with ATXN7L3 and weakly with ATXN7L3B. Interacts with MED1. Phosphorylated in G2/M phase, but not in G1 phase by CDK1. In terms of processing, ubiquitinated and subsequently degraded in a CDC20-dependent manner.

The protein resides in the nucleus. It localises to the cytoplasm. It catalyses the reaction Thiol-dependent hydrolysis of ester, thioester, amide, peptide and isopeptide bonds formed by the C-terminal Gly of ubiquitin (a 76-residue protein attached to proteins as an intracellular targeting signal).. Functionally, deubiquitinase that plays a role in several cellular processes including transcriptional regulation, cell cycle progression or innate immunity. As part of the transcription regulatory histone acetylation (HAT) complex SAGA, catalyzes the deubiquitination of both histones H2A and H2B, thereby acting as a transcriptional coactivator. Recruited to specific gene promoters by activators such as MYC, where it is required for transcription. Facilitates cell-cycle progression by stabilizing CCNB1 and antagonizing its proteasome-mediated degradation in a cell cycle-specific manner. Modulates cell cycle progression and apoptosis also by antagonizing TP53 transcriptional activation through deacetylase SIRT1 stabilization. Plays multiple roles in immunity and inflammation. Participates in antiviral response by deubiquitinating the importin KPNA2, leading to IRF3 nuclear translocation and subsequent type I interferon production. Acts as a central regulator of type III IFN signaling by negatively regulating STING1 activation and ubiquitination. Inhibits NLRP3 inflammasome activation by promoting NLRP3 degradation through ATG5-dependent autophagy. Deubiquitinates CD274 to induce its stabilization and thereby participates in maintenance of immune tolerance to self. Controls necroptotic cell death by regulating RIPK3 phosphorylation and ubiquitination. During bacterial infection, promotes pro-inflammatory response by targeting TRAF6 and removing its 'Lys-48'-linked polyubiquitination. This is Ubiquitin carboxyl-terminal hydrolase 22 (USP22) from Bos taurus (Bovine).